We begin with the raw amino-acid sequence, 322 residues long: Cytochrome c biogenesis protein CcsA (322 aa).

8 consecutive transmembrane segments (helical) span residues 9–29 (ILTHISFSVVSIVITIHLITL), 44–64 (GMITTFFCITGLLVTRWIFLG), 71–91 (LYESLIFLSWSFSIIHMVPYF), 97–117 (FLSAITAPSTFFTQGFATSGL), 143–163 (MILGYAALLCGSLFSVAFLVI), 225–245 (IISIGFIFLTIGILSGAVWAN), 254–274 (WDPKETWAFITWTIFAIYFHI), and 286–306 (AIVASIGFLLIWICYFGVNLL).

This sequence belongs to the CcmF/CycK/Ccl1/NrfE/CcsA family. As to quaternary structure, may interact with Ccs1.

Its subcellular location is the plastid. The protein resides in the chloroplast thylakoid membrane. In terms of biological role, required during biogenesis of c-type cytochromes (cytochrome c6 and cytochrome f) at the step of heme attachment. This Manihot esculenta (Cassava) protein is Cytochrome c biogenesis protein CcsA.